The following is a 29-amino-acid chain: KKDGYLVNKYTGCKVNCYKLGENKFCNRE.

The LCN-type CS-alpha/beta domain maps to Lys2 to Glu29.

This sequence belongs to the long (4 C-C) scorpion toxin superfamily. Sodium channel inhibitor family. Beta subfamily. In terms of tissue distribution, expressed by the venom gland.

It localises to the secreted. Binds to sodium channels (Nav) and shift the voltage of activation toward more negative potentials. This toxin is active on crustaceans. The polypeptide is Toxin II.9 (Centruroides limpidus (Mexican scorpion)).